The following is a 451-amino-acid chain: G-protein coupled receptor 61 (451 aa).

The segment covering 1-14 (MESSPIPQSSGNSS) has biased composition (low complexity). The disordered stretch occupies residues 1–31 (MESSPIPQSSGNSSTLGRVPQTPGPSTASGV). Topologically, residues 1–44 (MESSPIPQSSGNSSTLGRVPQTPGPSTASGVPEVGLRDVASESV) are extracellular. N-linked (GlcNAc...) asparagine glycosylation is present at Asn12. Residues 45-67 (ALFFMLLLDLTAVAGNAAVMAVI) form a helical membrane-spanning segment. Residues 68–75 (AKTPALRK) lie on the Cytoplasmic side of the membrane. Residues 76-98 (FVFVFHLCLVDLLAALTLMPLAM) form a helical membrane-spanning segment. The Extracellular portion of the chain corresponds to 99–112 (LSSSALFDHALFGE). A helical transmembrane segment spans residues 113–135 (VACRLYLFLSVCFVSLAILSVSA). Residues 136-155 (INVERYYYVVHPMRYEVRMT) lie on the Cytoplasmic side of the membrane. Residues 156–178 (LGLVASVLVGVWVKALAMASVPV) traverse the membrane as a helical segment. The Extracellular segment spans residues 179-206 (LGRVSWEEGAPSVPPGCSLQWSHSAYCQ). Residues 207 to 229 (LFVVVFAVLYFLLPLLLILVVYC) form a helical membrane-spanning segment. The Cytoplasmic portion of the chain corresponds to 230–287 (SMFRVARVAAMQHGPLPTWMETPRQRSESLSSRSTMVTSSGAPQTTPHRTFGGGKAAV). A helical transmembrane segment spans residues 288–310 (VLLAVGGQFLLCWLPYFSFHLYV). The Extracellular portion of the chain corresponds to 311-324 (ALSAQPISTGQVES). A helical membrane pass occupies residues 325-344 (VVTWIGYFCFTSNPFFYGCL). Over 345–451 (NRQIRGELSK…RPAASPRLES (107 aa)) the chain is Cytoplasmic.

Belongs to the G-protein coupled receptor 1 family. Forms heterodimer with MTNR1B. Interacts with ARRB1 and ARRB2 in a spontaneous and agonist-independent manner; leading to the internalization of GPR61 in the endosomal compartment. As to expression, expressed in brain; detected in frontal and temporal lobes, occipital pole, amygdala and hippocampus. Also expressed in testis and T cells, B cells, and monocyte. Low expression in many other tissues. Widely expressed in the hippocampus (at protein level).

It localises to the cell membrane. The protein localises to the endosome membrane. Orphan G-protein coupled receptor. Constitutively activates the G(s)-alpha/cAMP signaling pathway. Shows a reciprocal regulatory interaction with the melatonin receptor MTNR1B most likely through receptor heteromerization. May be involved in the regulation of food intake and body weight. The chain is G-protein coupled receptor 61 (GPR61) from Homo sapiens (Human).